Reading from the N-terminus, the 438-residue chain is Leupeptin-inactivating enzyme 1 (438 aa).

The first 37 residues, 1–37 (MSLSVSRRLAAVTAFAVAGLFASAVPAALAAPSAVAA), serve as a signal peptide directing secretion. The Zn(2+) site is built by H125 and D137. E171 acts as the Proton acceptor in catalysis. Residues E172, D200, and H287 each contribute to the Zn(2+) site. C285 and C290 are disulfide-bonded. The P/Homo B domain occupies 321-438 (VPPGQSFENT…GYINSWKITF (118 aa)).

It belongs to the peptidase M28 family. M28A subfamily. In terms of assembly, monomer. It depends on Zn(2+) as a cofactor.

Its subcellular location is the secreted. Its activity is regulated as follows. Activity is inhibited by metalloprotease inhibitors and activated by Mg(2+) and Ca(2+). A leucine-specific metalloprotease that plays a role in controlling the amount of leupeptin during colony development. Degrades leupeptin into three components, acetyl-leucine, leucine and argininal. Has a strict preference for leucine at the P1 site. The chain is Leupeptin-inactivating enzyme 1 (lieA) from Streptomyces exfoliatus (Streptomyces hydrogenans).